The following is a 484-amino-acid chain: Glutamate--tRNA ligase (484 aa).

The 'HIGH' region signature appears at 11-21; sequence PSPTGYLHIGN. Positions 252 to 256 match the 'KMSKS' region motif; the sequence is KLSKR. Lysine 255 is an ATP binding site.

This sequence belongs to the class-I aminoacyl-tRNA synthetase family. Glutamate--tRNA ligase type 1 subfamily. Monomer.

Its subcellular location is the cytoplasm. It catalyses the reaction tRNA(Glu) + L-glutamate + ATP = L-glutamyl-tRNA(Glu) + AMP + diphosphate. In terms of biological role, catalyzes the attachment of glutamate to tRNA(Glu) in a two-step reaction: glutamate is first activated by ATP to form Glu-AMP and then transferred to the acceptor end of tRNA(Glu). In Staphylococcus haemolyticus (strain JCSC1435), this protein is Glutamate--tRNA ligase.